The chain runs to 27 residues: Potassium channel toxin kappa-KTx 2.2 (27 aa).

2 disulfide bridges follow: cysteine 3-cysteine 21 and cysteine 7-cysteine 17.

This sequence belongs to the short scorpion toxin superfamily. Potassium channel inhibitor kappa-KTx family. Kappa-KTx 2 subfamily. Expressed by the venom gland.

Its subcellular location is the secreted. In terms of biological role, omTx1 decreases the amplitude of the potassium current of the rat channels Kv1.1/KCNA1 by 17% and Kv1.2/KCNA2 by 12% as well as human Kv1.3/KCNA3 by 24%. Its function is as follows. OmTx2 decreases the amplitude of the potassium current of the rat channels Kv1.1/KCNA1 by 8% and Kv1.2/KCNA2 by 10% as well as human Kv1.3/KCNA3 by 36%. Also alters glucose-induced insulin release from pancreatic islets. This is Potassium channel toxin kappa-KTx 2.2 from Opisthacanthus madagascariensis (Scorpion).